The chain runs to 427 residues: Glutamate-1-semialdehyde 2,1-aminomutase (427 aa).

N6-(pyridoxal phosphate)lysine is present on lysine 268.

The protein belongs to the class-III pyridoxal-phosphate-dependent aminotransferase family. HemL subfamily. It depends on pyridoxal 5'-phosphate as a cofactor.

The protein resides in the cytoplasm. It carries out the reaction (S)-4-amino-5-oxopentanoate = 5-aminolevulinate. It functions in the pathway porphyrin-containing compound metabolism; protoporphyrin-IX biosynthesis; 5-aminolevulinate from L-glutamyl-tRNA(Glu): step 2/2. In Methanococcus vannielii (strain ATCC 35089 / DSM 1224 / JCM 13029 / OCM 148 / SB), this protein is Glutamate-1-semialdehyde 2,1-aminomutase.